We begin with the raw amino-acid sequence, 310 residues long: tRNA pseudouridine synthase B (310 aa).

Catalysis depends on Asp-47, which acts as the Nucleophile.

This sequence belongs to the pseudouridine synthase TruB family. Type 1 subfamily.

It catalyses the reaction uridine(55) in tRNA = pseudouridine(55) in tRNA. Functionally, responsible for synthesis of pseudouridine from uracil-55 in the psi GC loop of transfer RNAs. This is tRNA pseudouridine synthase B from Caulobacter vibrioides (strain ATCC 19089 / CIP 103742 / CB 15) (Caulobacter crescentus).